Reading from the N-terminus, the 422-residue chain is Dipeptidase aclJ (422 aa).

Residues 28–45 (LAYSVTLTLVALFFTFAL) form a helical membrane-spanning segment. 2 residues coordinate Zn(2+): His77 and Asp79. N-linked (GlcNAc...) asparagine glycosylation occurs at Asn96. Residues Cys128 and Cys219 are joined by a disulfide bond. Glu190 lines the Zn(2+) pocket. Residue His217 coordinates substrate. A glycan (N-linked (GlcNAc...) asparagine) is linked at Asn270. Cys287 and Cys319 are disulfide-bonded. The substrate site is built by Arg291 and Asp351.

Belongs to the metallo-dependent hydrolases superfamily. Peptidase M19 family. Zn(2+) is required as a cofactor.

It localises to the membrane. It catalyses the reaction an L-aminoacyl-L-amino acid + H2O = 2 an L-alpha-amino acid. The protein operates within mycotoxin biosynthesis. In terms of biological role, dipeptidase; part of the gene cluster that mediates the biosynthesis of aspirochlorine (or antibiotic A30641), an unusual halogenated spiro compound with distinctive antifungal properties due to selective inhibition of protein biosynthesis, and which is also active against bacteria, viruses, and murine tumor cells. The non-ribosomal peptide synthetase (NRPS) aclP is responsible the formation of the diketopiperazine (DKP) core from the condensation of 2 phenylalanine residues. One Phe residue is tailored into chlorotyrosine by hydroxylation and chlorination, whereas the second Phe undergoes an unprecedented C-C bond cleavage to be converted into glycine. After formation of the DKP, sulfur is incorporated into the DKP by conjugation with glutathione by aclG, followed by its stepwise degradation to the thiol by aclI, aclJ and aclK, and the dithiol oxidation by aclT. In addition, oxygenases (aclB, aclC, aclL and aclO) and O-methyltransferases (aclM and aclU) act as tailoring enzymes to produce the intermediate dechloroaspirochlorine. Ultimately, chlorination of dechloroaspirochlorine by the halogenase aclH is the last step in the aspirochlorine pathway. The sequence is that of Dipeptidase aclJ from Aspergillus oryzae (strain ATCC 42149 / RIB 40) (Yellow koji mold).